Here is a 594-residue protein sequence, read N- to C-terminus: UvrABC system protein C (594 aa).

The GIY-YIG domain occupies 17–94 (LEPGCYLMKD…IKQYQPRYNI (78 aa)). One can recognise a UVR domain in the interval 199–234 (KTILHHLEDRMNKASEQLDFEQAKEYRDMIQHIHNL).

This sequence belongs to the UvrC family. In terms of assembly, interacts with UvrB in an incision complex.

It is found in the cytoplasm. Its function is as follows. The UvrABC repair system catalyzes the recognition and processing of DNA lesions. UvrC both incises the 5' and 3' sides of the lesion. The N-terminal half is responsible for the 3' incision and the C-terminal half is responsible for the 5' incision. This chain is UvrABC system protein C, found in Staphylococcus epidermidis (strain ATCC 12228 / FDA PCI 1200).